The sequence spans 299 residues: Non-structural protein V (299 aa).

The span at 137–160 (DGVEVWGGDEESENSDVDSGEPDP) shows a compositional bias: acidic residues. Disordered regions lie at residues 137–186 (DGVE…ETVE) and 205–229 (KAGKTLVVPPIPSQERPTASEKPIK). Residues His232, Cys251, Cys255, Cys267, Cys269, Cys272, Cys276, and Cys279 each coordinate Zn(2+).

The protein belongs to the paramyxoviruses V protein family. In terms of assembly, interacts with host IFIH1/MDA5 and DHX58/LGP2. Interacts with host TYK2; this interaction inhibits the type I interferon signaling pathway.

The protein localises to the host cytoplasm. Functionally, plays an essential role in the inhibition of host immune response. Prevents the establishment of cellular antiviral state by blocking interferon-alpha/beta (IFN-alpha/beta) production and signaling pathway. Interacts with host IFIH1/MDA5 and DHX58/LGP2 to inhibit the transduction pathway involved in the activation of IFN-beta promoter, thus protecting the virus against cell antiviral state. Blocks the type I interferon signaling pathway by interacting with host TYK2 and thereby inhibiting downstream STAT1 and STAT2 phosphorylation. The protein is Non-structural protein V (P/V) of Rinderpest virus (strain Kabete O) (RDV).